The following is a 626-amino-acid chain: DNA-directed RNA polymerase subunit gamma (626 aa).

The Zn(2+) site is built by Cys-71, Cys-73, Cys-86, and Cys-89. Residues Asp-467, Asp-469, and Asp-471 each contribute to the Mg(2+) site.

The protein belongs to the RNA polymerase beta' chain family. RpoC1 subfamily. In cyanobacteria the RNAP catalytic core is composed of 2 alpha, 1 beta, 1 beta', 1 gamma and 1 omega subunit. When a sigma factor is associated with the core the holoenzyme is formed, which can initiate transcription. Requires Mg(2+) as cofactor. Zn(2+) serves as cofactor.

It catalyses the reaction RNA(n) + a ribonucleoside 5'-triphosphate = RNA(n+1) + diphosphate. Functionally, DNA-dependent RNA polymerase catalyzes the transcription of DNA into RNA using the four ribonucleoside triphosphates as substrates. The chain is DNA-directed RNA polymerase subunit gamma from Synechocystis sp. (strain ATCC 27184 / PCC 6803 / Kazusa).